Here is a 389-residue protein sequence, read N- to C-terminus: Phospho-N-acetylmuramoyl-pentapeptide-transferase (389 aa).

10 helical membrane-spanning segments follow: residues 25-45 (RAVM…PWVI), 73-93 (TMGG…WGDL), 97-117 (FIWI…VDDY), 135-155 (FWQS…VSEA), 190-210 (ISYP…IVGA), 222-242 (GLVI…AYVM), 258-278 (GAGE…AFLW), 286-306 (VFMG…VAVI), 311-331 (IVLF…MLQV), and 366-386 (QVVV…LSTL).

The protein belongs to the glycosyltransferase 4 family. MraY subfamily. Mg(2+) is required as a cofactor.

Its subcellular location is the cell inner membrane. It catalyses the reaction UDP-N-acetyl-alpha-D-muramoyl-L-alanyl-gamma-D-glutamyl-meso-2,6-diaminopimeloyl-D-alanyl-D-alanine + di-trans,octa-cis-undecaprenyl phosphate = di-trans,octa-cis-undecaprenyl diphospho-N-acetyl-alpha-D-muramoyl-L-alanyl-D-glutamyl-meso-2,6-diaminopimeloyl-D-alanyl-D-alanine + UMP. The protein operates within cell wall biogenesis; peptidoglycan biosynthesis. Functionally, catalyzes the initial step of the lipid cycle reactions in the biosynthesis of the cell wall peptidoglycan: transfers peptidoglycan precursor phospho-MurNAc-pentapeptide from UDP-MurNAc-pentapeptide onto the lipid carrier undecaprenyl phosphate, yielding undecaprenyl-pyrophosphoryl-MurNAc-pentapeptide, known as lipid I. The polypeptide is Phospho-N-acetylmuramoyl-pentapeptide-transferase (Burkholderia multivorans (strain ATCC 17616 / 249)).